A 451-amino-acid polypeptide reads, in one-letter code: MDGVSQRVDQRPNRIAVLSVHTSPLAQPGTGDAGGMNVYVLRTAVELAQRGIEVEIFTRATASHIPPVQEAAPGVLVRNVVAGPFEGLDKQDLPTQLCPFTAEVLRQEARQLPGYYDLVHSHYWLSGQVGWLTRDRWRVPLVHTAHTLAAVKNAALAEGDAPEPVSREIGEKQIIAEADRMVANTAEEARQLVELYGADRDRIDVVPPGADLTRYRPGDRAAARAELGLAPGEPIVAFVGRIQPLKAPDVLVRAAAELLRRDPGRALRVLIVGGPSGSGLQRPDALIELAAELGISERVTFLPPQPPERLVQVYRAADLVAVPSYSESFGLVAIEAQASGTPVLAADVGGLSTAVRDGATGLLVRGHETADWADALGALLGDRDRLRRMGLRAVAHAAGFSWAHTAEGLLESYSAALWEFHGARAGVGAGRMTPNQARSRALWRRRMGVRR.

H21 provides a ligand contact to 1D-myo-inositol 3-phosphate. UDP-N-acetyl-alpha-D-glucosamine-binding positions include Q27 to P28 and G35. 1D-myo-inositol 3-phosphate is bound by residues D32–N37, K90, Y123, T147, and R167. UDP-N-acetyl-alpha-D-glucosamine contacts are provided by R241, K246, and Q305. The Mg(2+) site is built by Y314, R315, and A317. UDP-N-acetyl-alpha-D-glucosamine contacts are provided by E327 and E335. Residue T341 coordinates Mg(2+).

This sequence belongs to the glycosyltransferase group 1 family. MshA subfamily. In terms of assembly, homodimer.

It carries out the reaction 1D-myo-inositol 3-phosphate + UDP-N-acetyl-alpha-D-glucosamine = 1D-myo-inositol 2-acetamido-2-deoxy-alpha-D-glucopyranoside 3-phosphate + UDP + H(+). Functionally, catalyzes the transfer of a N-acetyl-glucosamine moiety to 1D-myo-inositol 3-phosphate to produce 1D-myo-inositol 2-acetamido-2-deoxy-glucopyranoside 3-phosphate in the mycothiol biosynthesis pathway. This Nocardia farcinica (strain IFM 10152) protein is D-inositol 3-phosphate glycosyltransferase.